A 429-amino-acid polypeptide reads, in one-letter code: Glutamate-1-semialdehyde 2,1-aminomutase (429 aa).

Position 265 is an N6-(pyridoxal phosphate)lysine (lysine 265).

Belongs to the class-III pyridoxal-phosphate-dependent aminotransferase family. HemL subfamily. As to quaternary structure, homodimer. Pyridoxal 5'-phosphate is required as a cofactor.

It is found in the cytoplasm. The enzyme catalyses (S)-4-amino-5-oxopentanoate = 5-aminolevulinate. It participates in porphyrin-containing compound metabolism; protoporphyrin-IX biosynthesis; 5-aminolevulinate from L-glutamyl-tRNA(Glu): step 2/2. This chain is Glutamate-1-semialdehyde 2,1-aminomutase, found in Acidobacterium capsulatum (strain ATCC 51196 / DSM 11244 / BCRC 80197 / JCM 7670 / NBRC 15755 / NCIMB 13165 / 161).